We begin with the raw amino-acid sequence, 1321 residues long: MELEDGVVYQEEPGGSGAVMSERVSGLAGSIYREFERLIGRYDEEVVKELMPLVVAVLENLDSVFAQDQEHQVELELLRDDNEQLITQYEREKALRKHAEEKFIEFEDSQEQEKKDLQTRVESLESQTRQLELKAKNYADQISRLEEREAELKKEYNALHQRHTEMIHNYMEHLERTKLHQLSGSDQLEATAHSRIRKERPISLGIFPLPAGDGLLTPDTQKGGETPGSEQWKFQELSQPRSHTSLKVSHSPEPPKAVEQEDELSDISQGGSKATTPASTANSDVSAIPPDTPSKEDNEGFVKGTDTSNKSEISKHIEVQVAQETRNVSTESGENEEKSEVQAIIESTPELDMDKDLSGYKGSSTPTKGIENKAFDRNTESLFEELSSAGSGLIGDVDEGADLLGMGREVENLILENTQLLETKNALNVVKNDLIAKVDELTCEKDVLQGELEAVKQAKLKLEDKNRELEEELRKARAEAEDARQKAKDDDDSDIPTAQRKRFTRVEMARVLMERNQYKERLMELQEAVRWTEMIRASRENPAMQEKKRSSIWQFFSRLFSSSSNATKKPEPPVNLKYNAPTSHVTPSVKKRSSTLSQLPGDKSKAFDFLSEETEASLASRREQKREQYRQVKAHVQKEDGRVQAFGWSLPQKYKQVANGQGETKMKNLPVPVYLRPLDEKDASMKLWCAVGVNLSGGKTRDGGSVVGASVFYKDIAGLDTEGSKQRSASQSSLDKLDQELKEQQKEFKNQEELSSQVWICTSTHSTTKVIIIDAVQPGNILDSFTVCNSHVLCIASVPGARETDYPAGEELSESGQVDKASLCGSMTSNSSAEMDSLLGGITVVGCSTEGLTGAATSPSTNGASPVIEKPPEMETENSEVDENIPTAEEATEATEGNAGSTEDTVDISQPGVYTEHVFTDPLGVQIPEDLSPVFQSSNDSDVYKDQISVLPNEQDLAREEAQKMSSLLPTMWLGAQNGCLYVHSSVAQWRKCLHSIKLKDSILSIVHVKGIVLVALADGTLAIFHRGVDGQWDLSNYHLLDLGRPHHSIRCMTVVHDKVWCGYRNKIYVVQPKAMKIEKSFDAHPRKESQVRQLAWVGDGVWVSIRLDSTLRLYHAHTYQHLQDVDIEPYVSKMLGTGKLGFSFVRITALMVSCNRLWVGTGNGVIISIPLTETNKTSGTPGNRPGSVIRVYGDENSDKVTPGTFIPYCSMAHAQLCFHGHRDAVKFFVAVPGQVISPQSSSGGADLTADKAGSSAQEPSSQTPLKSMLVISGGEGYIDFRMGDEGGESELLGEDLPLEPSVTKAERSHLIVWQVMCGNE.

Methionine 1 carries the post-translational modification N-acetylmethionine. The RH1 domain occupies valine 7–leucine 95. Residues alanine 66–methionine 166 adopt a coiled-coil conformation. Phosphoserine occurs at positions 109, 183, 185, 194, and 203. The disordered stretch occupies residues serine 203–serine 308. Threonine 217 carries the phosphothreonine modification. Residues glutamate 236–valine 248 show a composition bias toward polar residues. Phosphoserine occurs at positions 238, 251, 265, 268, and 272. Residues aspartate 266–valine 285 show a composition bias toward polar residues. Position 292 is a phosphothreonine (threonine 292). Serine 311, serine 329, serine 332, and serine 347 each carry phosphoserine. Residues alanine 322–serine 332 are compositionally biased toward polar residues. The tract at residues alanine 322 to valine 341 is disordered. Phosphothreonine is present on residues threonine 348, threonine 365, and threonine 418. A coiled-coil region spans residues arginine 408–methionine 534. The span at leucine 473–aspartate 489 shows a compositional bias: basic and acidic residues. 2 disordered regions span residues leucine 473–arginine 500 and serine 563–proline 600. Positions arginine 500 to serine 604 constitute an RH2 domain. The residue at position 586 (threonine 586) is a Phosphothreonine. A Phosphoserine modification is found at serine 588. Threonine 595 is subject to Phosphothreonine. Phosphoserine occurs at positions 705, 728, 730, 732, and 733. Residues serine 724 to valine 758 adopt a coiled-coil conformation. Residues threonine 853–glutamate 883 form a disordered region. The segment covering alanine 855–alanine 864 has biased composition (polar residues). A compositionally biased stretch (acidic residues) spans methionine 874–glutamate 883. Serine 1188 is modified (phosphoserine). The disordered stretch occupies residues proline 1239 to lysine 1267. The span at serine 1255–leucine 1266 shows a compositional bias: polar residues. Residue threonine 1264 is modified to Phosphothreonine.

This sequence belongs to the JIP scaffold family. As to quaternary structure, homodimer. The homodimer interacts with ARF6, forming a heterotetramer. Homooligomer. Interacts with MAX, MAPK8, MAPK14, MAP3K3, MYC, and MAP2K4. Interacts with KNS2. Interaction with KNS2 is important in the formation of ternary complex with MAPK8. Interacts with PIP4P1. Interacts with PIKFYVE. Phosphorylated by MAPK8 and MAPK14. In terms of tissue distribution, highly expressed in brain, kidney, liver, heart.

The protein resides in the cytoplasm. It is found in the perinuclear region. The protein localises to the lysosome membrane. Its function is as follows. The JNK-interacting protein (JIP) group of scaffold proteins selectively mediates JNK signaling by aggregating specific components of the MAPK cascade to form a functional JNK signaling module. Regulates lysosomal positioning by acting as an adapter protein which links PIP4P1-positive lysosomes to the dynein-dynactin complex. Assists PIKFYVE selective functionality in microtubule-based endosome-to-TGN trafficking. This is C-Jun-amino-terminal kinase-interacting protein 4 from Mus musculus (Mouse).